Reading from the N-terminus, the 219-residue chain is Probable nicotinate-nucleotide adenylyltransferase (219 aa).

It belongs to the NadD family.

The catalysed reaction is nicotinate beta-D-ribonucleotide + ATP + H(+) = deamido-NAD(+) + diphosphate. It participates in cofactor biosynthesis; NAD(+) biosynthesis; deamido-NAD(+) from nicotinate D-ribonucleotide: step 1/1. Its function is as follows. Catalyzes the reversible adenylation of nicotinate mononucleotide (NaMN) to nicotinic acid adenine dinucleotide (NaAD). This Erythrobacter litoralis (strain HTCC2594) protein is Probable nicotinate-nucleotide adenylyltransferase.